The primary structure comprises 336 residues: Vacuolar protein sorting-associated protein 26B (336 aa).

3 positions are modified to phosphoserine: S302, S304, and S319.

This sequence belongs to the VPS26 family. Component of the heterotrimeric retromer cargo-selective complex (CSC), also described as vacuolar protein sorting VPS subcomplex (VPS,) formed by VPS26 (VPS26A or VPS26B), VPS29 and VPS35. The CSC has a highly elongated structure with VPS26 and VPS29 binding independently at opposite distal ends of VPS35 as central platform. The CSC is believed to associate with variable sorting nexins to form functionally distinct retromer complex variants. The originally described retromer complex (also called SNX-BAR retromer) is a pentamer containing the CSC and a heterodimeric membrane-deforming subcomplex formed between SNX1 or SNX2 and SNX5 or SNX6 (also called SNX-BAR subcomplex); the respective CSC and SNX-BAR subcomplexes associate with low affinity. The CSC associates with SNX3 to form a SNX3-retromer complex. The CSC associates with SNX27, the WASH complex and the SNX-BAR subcomplex to form the SNX27-retromer complex. Interacts with VPS29, VPS35, TBC1D5, GOLPH3, SNX27.

The protein localises to the cytoplasm. It is found in the membrane. It localises to the early endosome. The protein resides in the late endosome. Its function is as follows. Acts as a component of the retromer cargo-selective complex (CSC). The CSC is believed to be the core functional component of retromer or respective retromer complex variants acting to prevent missorting of selected transmembrane cargo proteins into the lysosomal degradation pathway. The recruitment of the CSC to the endosomal membrane involves RAB7A and SNX3. The SNX-BAR retromer mediates retrograde transport of cargo proteins from endosomes to the trans-Golgi network (TGN) and is involved in endosome-to-plasma membrane transport for cargo protein recycling. The SNX3-retromer mediates the retrograde transport of WLS distinct from the SNX-BAR retromer pathway. The SNX27-retromer is believed to be involved in endosome-to-plasma membrane trafficking and recycling of a broad spectrum of cargo proteins. The CSC seems to act as recruitment hub for other proteins, such as the WASH complex and TBC1D5. May be involved in retrograde transport of SORT1 but not of IGF2R. Acts redundantly with VSP26A in SNX-27 mediated endocytic recycling of SLC2A1/GLUT1. This Homo sapiens (Human) protein is Vacuolar protein sorting-associated protein 26B (VPS26B).